The sequence spans 228 residues: AA9 family lytic polysaccharide monooxygenase A (228 aa).

Cu(2+) contacts are provided by His1 and His86. At His1 the chain carries Methylhistidine. 2 disulfides stabilise this stretch: Cys56–Cys178 and Cys97–Cys101. N-linked (GlcNAc...) asparagine glycosylation occurs at Asn138. O2 is bound by residues His164 and Gln173. Tyr175 contributes to the Cu(2+) binding site.

It belongs to the polysaccharide monooxygenase AA9 family. The cofactor is Cu(2+). The catalytically essential N-terminal histidine His-22 is post-translationally modified by methylation to prevent protonation of the histidine side chain, and protect the critical active site of the enzyme from oxidative damage.

The protein resides in the secreted. It carries out the reaction [(1-&gt;4)-beta-D-glucosyl]n+m + reduced acceptor + O2 = 4-dehydro-beta-D-glucosyl-[(1-&gt;4)-beta-D-glucosyl]n-1 + [(1-&gt;4)-beta-D-glucosyl]m + acceptor + H2O.. Its activity is regulated as follows. Small amounts of H(2)O(2) boost LPMO activity, while higher amounts lead to inactivation of the enzyme. Lytic polysaccharide monooxygenase (LPMO) that depolymerizes crystalline and amorphous polysaccharides via the oxidation of scissile alpha- or beta-(1-4)-glycosidic bonds, yielding C1 and C4 oxidation product. Catalysis by LPMOs requires the reduction of the active-site copper from Cu(II) to Cu(I) by a reducing agent and H(2)O(2) or O(2) as a cosubstrate. Is able to cleave cellulose and xylan to produce C1- and C4-oxidized products. The chain is AA9 family lytic polysaccharide monooxygenase A from Thermoascus aurantiacus.